Reading from the N-terminus, the 456-residue chain is UDP-N-acetylmuramate--L-alanine ligase (456 aa).

Position 117–123 (117–123) interacts with ATP; the sequence is GTHGKTT.

It belongs to the MurCDEF family.

It localises to the cytoplasm. It catalyses the reaction UDP-N-acetyl-alpha-D-muramate + L-alanine + ATP = UDP-N-acetyl-alpha-D-muramoyl-L-alanine + ADP + phosphate + H(+). It functions in the pathway cell wall biogenesis; peptidoglycan biosynthesis. Cell wall formation. This is UDP-N-acetylmuramate--L-alanine ligase from Clostridium tetani (strain Massachusetts / E88).